The sequence spans 308 residues: tRNA dimethylallyltransferase (308 aa).

Residue 9 to 16 (GPTAAGKT) coordinates ATP. Position 11 to 16 (11 to 16 (TAAGKT)) interacts with substrate. 2 interaction with substrate tRNA regions span residues 34–37 (DSMQ) and 158–162 (QRLLR).

It belongs to the IPP transferase family. Monomer. It depends on Mg(2+) as a cofactor.

It catalyses the reaction adenosine(37) in tRNA + dimethylallyl diphosphate = N(6)-dimethylallyladenosine(37) in tRNA + diphosphate. Catalyzes the transfer of a dimethylallyl group onto the adenine at position 37 in tRNAs that read codons beginning with uridine, leading to the formation of N6-(dimethylallyl)adenosine (i(6)A). This chain is tRNA dimethylallyltransferase, found in Maricaulis maris (strain MCS10) (Caulobacter maris).